Consider the following 248-residue polypeptide: Coproheme decarboxylase (248 aa).

Residues Arg-130, 144 to 148 (YPMDK), His-171, Gln-184, and Ser-222 contribute to the Fe-coproporphyrin III site. Residue Tyr-144 is part of the active site.

This sequence belongs to the ChdC family. Type 1 subfamily. Homopentamer. Fe-coproporphyrin III serves as cofactor.

The catalysed reaction is Fe-coproporphyrin III + 2 H2O2 + 2 H(+) = heme b + 2 CO2 + 4 H2O. The enzyme catalyses Fe-coproporphyrin III + H2O2 + H(+) = harderoheme III + CO2 + 2 H2O. It carries out the reaction harderoheme III + H2O2 + H(+) = heme b + CO2 + 2 H2O. Its pathway is porphyrin-containing compound metabolism; protoheme biosynthesis. In terms of biological role, involved in coproporphyrin-dependent heme b biosynthesis. Catalyzes the decarboxylation of Fe-coproporphyrin III (coproheme) to heme b (protoheme IX), the last step of the pathway. The reaction occurs in a stepwise manner with a three-propionate intermediate. The protein is Coproheme decarboxylase of Geobacillus kaustophilus (strain HTA426).